A 149-amino-acid polypeptide reads, in one-letter code: Putative pre-16S rRNA nuclease (149 aa).

The protein belongs to the YqgF nuclease family.

The protein localises to the cytoplasm. Its function is as follows. Could be a nuclease involved in processing of the 5'-end of pre-16S rRNA. This Burkholderia ambifaria (strain MC40-6) protein is Putative pre-16S rRNA nuclease.